The following is a 686-amino-acid chain: Probable serine/threonine-protein kinase pdkA (686 aa).

The interval 1 to 31 (MENIVITNTSGGGGGGVPSSSTDPPNNTTTT) is disordered. The span at 18 to 31 (PSSSTDPPNNTTTT) shows a compositional bias: low complexity. Positions 69 to 449 (FIIGKVLGEG…FDNLKAHPFF (381 aa)) constitute a Protein kinase domain. ATP is bound by residues 79 to 81 (SYG) and Lys-98. The segment at 100-144 (LEKKQIIKENKIKYVQIEKEIFCKSNHPNIVKLFFTFRSEQCLYY) is PIF-pocket. ATP-binding positions include 147–149 (ELC) and Asp-153. Asp-192 functions as the Proton acceptor in the catalytic mechanism. Glu-196 and Asp-210 together coordinate ATP. 2 disordered regions span residues 211–321 (FGTG…NTNT) and 481–584 (LFSP…NNIS). Residues 222 to 257 (SSQQQQQQQQQQQQLPTNSSGNLSSLLNNVNNLSVS) show a composition bias toward low complexity. Polar residues predominate over residues 258 to 267 (TDLTQQQQNR). Composition is skewed to low complexity over residues 268–279 (TSSVDSASTTDS), 288–321 (TTTT…NTNT), and 503–568 (NSCN…QRSG). Residues 593 to 682 (VIYQGLVWKR…DSIKSVILSS (90 aa)) enclose the PH domain.

The protein belongs to the protein kinase superfamily. AGC Ser/Thr protein kinase family. PDPK1 subfamily.

It carries out the reaction L-seryl-[protein] + ATP = O-phospho-L-seryl-[protein] + ADP + H(+). It catalyses the reaction L-threonyl-[protein] + ATP = O-phospho-L-threonyl-[protein] + ADP + H(+). This Dictyostelium discoideum (Social amoeba) protein is Probable serine/threonine-protein kinase pdkA (pdkA).